Here is a 465-residue protein sequence, read N- to C-terminus: MAPQHLPSTRMASPGMLLGLLLTSCLTLCLSCQNSNNFALTNPEKSIHQESDTKETREEEELDTEILEVFHPTQEWQTLQPGQAVPAGSHVRMNLQTGVNEVKLQQEDKFQNNLKGFKRGRRLDINANTYTSQDLKSALAKFKEGTEMENSKDELARQATVKQLFRPIEELKKEFDELNVVLETDMQIMVRLINKFNSSSSSLEEKVAALFDLEYYVHQMDNAQDLLSFGGLQVVINGLNSTEPLVKEYAAFVLGAAFSSNPKVQVEAIEGGALQKLLVILATNQPLPAKKKVLFALCSLLRHFPYAQQQFLKLGGLQVLRSLVQEKSAKVLAVRVVTLLYDLVTEKMFAEEEAELTQDSSPEKLQQYRQVQLLPGLQEQGWCEITAQLLALPEHDAREKVLQTLGALLTTCRDRYRQDLQLSRTLGRLQAEYQALASLELQEGEDDGYFRELLASINSLMKELR.

The signal sequence occupies residues 1-31 (MAPQHLPSTRMASPGMLLGLLLTSCLTLCLS). Positions 1 to 260 (MAPQHLPSTR…AFVLGAAFSS (260 aa)) are interaction with HSPA5 and localization to the endoplasmic reticulum. N-linked (GlcNAc...) asparagine glycans are attached at residues asparagine 197 and asparagine 240.

Belongs to the SIL1 family. As to quaternary structure, interacts with HSPA5. N-glycosylated. Post-translationally, ubiquitinated by the CRL2(FEM1A) and CRL2(FEM1C) complexes, which recognize the -Lys-Xaa-Xaa-Arg C-degron at the C-terminus, leading to its degradation. In terms of tissue distribution, expressed in several areas of the brain including the cerebellum, cerebral cortex, cortical neurons, glial cells of white matter, hippocampus, olfactory bulb, Purkinje cells, inferior olive and the choroids plexus. Also expressed in the eye and skeletal muscle.

The protein resides in the endoplasmic reticulum lumen. In terms of biological role, required for protein translocation and folding in the endoplasmic reticulum (ER). Functions as a nucleotide exchange factor for the ER lumenal chaperone HSPA5. This Mus musculus (Mouse) protein is Nucleotide exchange factor SIL1 (Sil1).